A 163-amino-acid chain; its full sequence is Transcriptional repressor NrdR (163 aa).

The segment at 3-34 is a zinc-finger region; sequence CPFCAHPEDKVVDSRESKEGESIRRRRECLKC. The 91-residue stretch at 49–139 folds into the ATP-cone domain; sequence YMVVKKDGRR…VYLDFKDVRE (91 aa).

This sequence belongs to the NrdR family. Zn(2+) serves as cofactor.

Negatively regulates transcription of bacterial ribonucleotide reductase nrd genes and operons by binding to NrdR-boxes. This Koribacter versatilis (strain Ellin345) protein is Transcriptional repressor NrdR.